A 312-amino-acid chain; its full sequence is Chitin deacetylase 2 (312 aa).

The N-terminal stretch at 1–44 (MRIQLNTIDLQCIIALSCLGQFVHAEANREDLKQIDFQFPVLER) is a signal peptide. An intrachain disulfide couples C117 to C300. The NodB homology domain maps to 118–307 (SKLSQTFDDG…SHCVGGIDYI (190 aa)). D125 acts as the Proton acceptor in catalysis. Residue D125 participates in acetate binding. Residue D126 coordinates Co(2+). N142 carries N-linked (GlcNAc...) asparagine glycosylation. Residues H172 and H176 each contribute to the Co(2+) site. N181 and N199 each carry an N-linked (GlcNAc...) asparagine glycan. Residue Y213 coordinates acetate. N-linked (GlcNAc...) asparagine glycans are attached at residues N246 and N263. The active-site Proton donor is the H273.

This sequence belongs to the polysaccharide deacetylase family. As to quaternary structure, monomer. Co(2+) is required as a cofactor. Post-translationally, N-glycosylated.

The protein localises to the prospore. The catalysed reaction is [(1-&gt;4)-N-acetyl-beta-D-glucosaminyl](n) + n H2O = chitosan + n acetate. Functionally, hydrolyzes the N-acetamido groups of N-acetyl-D-glucosamine residues in chitin to form chitosan and acetate. Chitosan is a component of the spore wall. The protein is Chitin deacetylase 2 of Saccharomyces cerevisiae (strain ATCC 204508 / S288c) (Baker's yeast).